The following is a 200-amino-acid chain: Glycerol-3-phosphate acyltransferase (200 aa).

5 consecutive transmembrane segments (helical) span residues 8–28 (ALALWGVIGYLLGSIPFGMVL), 57–77 (LAAALTLVLDGGKGVVAVLAA), 88–108 (IAGLMAMIGHCYPVWLRFAGG), 114–134 (FLGIVLALAFPVGVGCCLAWL), and 159–179 (FLLGFPGAVVLLILLGALIFW).

This sequence belongs to the PlsY family. In terms of assembly, probably interacts with PlsX.

The protein resides in the cell inner membrane. It carries out the reaction an acyl phosphate + sn-glycerol 3-phosphate = a 1-acyl-sn-glycero-3-phosphate + phosphate. The protein operates within lipid metabolism; phospholipid metabolism. Functionally, catalyzes the transfer of an acyl group from acyl-phosphate (acyl-PO(4)) to glycerol-3-phosphate (G3P) to form lysophosphatidic acid (LPA). This enzyme utilizes acyl-phosphate as fatty acyl donor, but not acyl-CoA or acyl-ACP. The protein is Glycerol-3-phosphate acyltransferase of Roseobacter denitrificans (strain ATCC 33942 / OCh 114) (Erythrobacter sp. (strain OCh 114)).